A 206-amino-acid polypeptide reads, in one-letter code: RNA pyrophosphohydrolase (206 aa).

A Nudix hydrolase domain is found at glycine 6–lysine 150. Residues glycine 38–glycine 59 carry the Nudix box motif. Residues lysine 162–lysine 191 show a composition bias toward basic and acidic residues. Residues lysine 162–glutamine 206 form a disordered region.

This sequence belongs to the Nudix hydrolase family. RppH subfamily. Requires a divalent metal cation as cofactor.

In terms of biological role, accelerates the degradation of transcripts by removing pyrophosphate from the 5'-end of triphosphorylated RNA, leading to a more labile monophosphorylated state that can stimulate subsequent ribonuclease cleavage. This is RNA pyrophosphohydrolase from Actinobacillus pleuropneumoniae serotype 3 (strain JL03).